Consider the following 610-residue polypeptide: UvrABC system protein C (610 aa).

One can recognise a GIY-YIG domain in the interval 16-94; the sequence is SQPGVYRMYD…IKLYQPRYNV (79 aa). The 36-residue stretch at 204-239 folds into the UVR domain; it reads QQVLTQLISRMEEASRLLHFEDAARIRDQIQAVRRV.

Belongs to the UvrC family. As to quaternary structure, interacts with UvrB in an incision complex.

It localises to the cytoplasm. The UvrABC repair system catalyzes the recognition and processing of DNA lesions. UvrC both incises the 5' and 3' sides of the lesion. The N-terminal half is responsible for the 3' incision and the C-terminal half is responsible for the 5' incision. In Yersinia enterocolitica serotype O:8 / biotype 1B (strain NCTC 13174 / 8081), this protein is UvrABC system protein C.